The following is a 184-amino-acid chain: Photosystem I assembly protein Ycf3 (184 aa).

TPR repeat units follow at residues A31–Q64, S68–L101, and M131–N164.

It belongs to the Ycf3 family.

It is found in the plastid. The protein resides in the chloroplast thylakoid membrane. Essential for the assembly of the photosystem I (PSI) complex. May act as a chaperone-like factor to guide the assembly of the PSI subunits. This Thalassiosira pseudonana (Marine diatom) protein is Photosystem I assembly protein Ycf3.